A 540-amino-acid polypeptide reads, in one-letter code: MPIVKLNNEYLTRLTGTDIETIRSSLPMMGSEVEREEEKQTDVQFFPNRPDLYSAEGTARALRGYLGIETGLPTYEVKPSGISFSVDPKLANIRPYLGSAVIRNVHMDNAMIESLMGLQESLHWAVGRGRKKVAIGVHDLDKIEGPFSYIAADRKTTFVPLDYDVEMTMEEILAEHPKGKAYARIVEEFERFPLITDAKGRVCSFPPIINGELTRVTEDTQNILLDVTGIEPRAVSVAVKILCAAFVEMGAEIESVEIDGVVSPDLRPEKRTVSVSECSKLTGIPMTASQMTELLMKMRFGAEVIDEDTVSVDIPCYRADIMHDHDVYEDAAIAYGYDKIETSLPPSFTVGKPHPVQKLYSLVRNIMVGLSYIENTPFTLTSGDVSYSLMHRPENPAALHVLHPISEDQTIIRTDILPLLMESLSINRSRELPQKIFACGDVVENLVTYPKMAAASIHTSADFSEIYAVMDAFCRMMSIEYEVRDSADDAFIPGRRGDIYVSGEKIGVFGEINPDVLVGFGLEHQAVAFEIDLRGFVSNE.

The 77-residue stretch at 266–342 folds into the B5 domain; the sequence is LRPEKRTVSV…IAYGYDKIET (77 aa). The Mg(2+) site is built by D320, D326, E329, and D330.

It belongs to the phenylalanyl-tRNA synthetase beta subunit family. Type 2 subfamily. In terms of assembly, tetramer of two alpha and two beta subunits. Mg(2+) is required as a cofactor.

The protein localises to the cytoplasm. The enzyme catalyses tRNA(Phe) + L-phenylalanine + ATP = L-phenylalanyl-tRNA(Phe) + AMP + diphosphate + H(+). The chain is Phenylalanine--tRNA ligase beta subunit from Methanocorpusculum labreanum (strain ATCC 43576 / DSM 4855 / Z).